Here is a 312-residue protein sequence, read N- to C-terminus: D-apiose import binding protein (312 aa).

The N-terminal stretch at 1-26 is a signal peptide; that stretch reads MKASKRWVALAAATLTLFTATGTAQA. Residues asparagine 39, 115-116, 162-164, arginine 168, asparagine 218, aspartate 243, and glutamine 263 contribute to the D-apiofuranose site; these read DR and DIN.

It belongs to the bacterial solute-binding protein 2 family.

It localises to the periplasm. In terms of biological role, part of an ABC transporter complex involved in D-apiose import. Binds D-apiose, D-ribose and D-ribulose. In Paraburkholderia graminis (strain ATCC 700544 / DSM 17151 / LMG 18924 / NCIMB 13744 / C4D1M), this protein is D-apiose import binding protein.